A 376-amino-acid polypeptide reads, in one-letter code: uncharacterized protein (376 aa).

It belongs to the mimivirus L17x/L18x family.

This is an uncharacterized protein from Acanthamoeba polyphaga (Amoeba).